The primary structure comprises 273 residues: MAIVKCKPTSPGRRHVIKVVNKELYKGKPYSLLLSKKSKTGGRNNNGRITTRHIGGGHKRIYRIIDFKRNKDNITASIERFEYDPNRSSNIALILYKDGKRNYILAPKNLKVGDTVISGENVPIKIGNSLPIKNIPVGSFIHNVEMRPGKGGQIARSAGSYVQLVACDKEYATLRLRSGEMRKTESNCRATIGEVGNSEHMLKVLGKAGASRWIGIRPTVRGTAMNPVDHPHGGGEGRNFGKHPVTPWGLQTKGKKTRKNKRTEKFILRHRHK.

The disordered stretch occupies residues 224-263; sequence AMNPVDHPHGGGEGRNFGKHPVTPWGLQTKGKKTRKNKRT. The segment covering 253–263 has biased composition (basic residues); it reads KGKKTRKNKRT.

Belongs to the universal ribosomal protein uL2 family. As to quaternary structure, part of the 50S ribosomal subunit. Forms a bridge to the 30S subunit in the 70S ribosome.

In terms of biological role, one of the primary rRNA binding proteins. Required for association of the 30S and 50S subunits to form the 70S ribosome, for tRNA binding and peptide bond formation. It has been suggested to have peptidyltransferase activity; this is somewhat controversial. Makes several contacts with the 16S rRNA in the 70S ribosome. The chain is Large ribosomal subunit protein uL2 from Buchnera aphidicola subsp. Schizaphis graminum (strain Sg).